The following is a 408-amino-acid chain: Imidazolonepropionase (408 aa).

Residues His74 and His76 each contribute to the Fe(3+) site. Zn(2+) is bound by residues His74 and His76. The 4-imidazolone-5-propanoate site is built by Arg83, Tyr146, and His179. N-formimidoyl-L-glutamate is bound at residue Tyr146. His244 is a binding site for Fe(3+). Residue His244 coordinates Zn(2+). Gln247 lines the 4-imidazolone-5-propanoate pocket. A Fe(3+)-binding site is contributed by Asp319. Asp319 contacts Zn(2+). Residues Asn321 and Gly323 each coordinate N-formimidoyl-L-glutamate. Thr324 lines the 4-imidazolone-5-propanoate pocket.

It belongs to the metallo-dependent hydrolases superfamily. HutI family. Requires Zn(2+) as cofactor. The cofactor is Fe(3+).

Its subcellular location is the cytoplasm. It catalyses the reaction 4-imidazolone-5-propanoate + H2O = N-formimidoyl-L-glutamate. Its pathway is amino-acid degradation; L-histidine degradation into L-glutamate; N-formimidoyl-L-glutamate from L-histidine: step 3/3. Functionally, catalyzes the hydrolytic cleavage of the carbon-nitrogen bond in imidazolone-5-propanoate to yield N-formimidoyl-L-glutamate. It is the third step in the universal histidine degradation pathway. This is Imidazolonepropionase from Ralstonia nicotianae (strain ATCC BAA-1114 / GMI1000) (Ralstonia solanacearum).